The primary structure comprises 248 residues: uncharacterized protein (248 aa).

6 helical membrane passes run 65–85 (IIIYGVILQIYTTILFKQFLT), 105–125 (SITSFFYNGFCHVAVMIILWY), 126–146 (ISWTLIDYGTLVIAIMILGFI), 156–176 (LCCFIAIFTSIVHSTFFTLLI), 188–208 (LILNLTFLTITYILMILSDYS), and 222–242 (VIYIYCIQIIILQFIFIYKYT).

The protein resides in the cell membrane. This is an uncharacterized protein from Rickettsia prowazekii (strain Madrid E).